The sequence spans 285 residues: Transcription factor MYB15 (285 aa).

HTH myb-type domains are found at residues 9 to 61 (KMGL…MNYL) and 62 to 116 (KPDI…KKRL). 2 consecutive DNA-binding regions (H-T-H motif) follow at residues 37–61 (WRALPKQAGLLRCGKSCRLRWMNYL) and 89–112 (WSAIAAKLPGRTDNEIKNVWHTHL). A disordered region spans residues 115–172 (RLEDYQPAKPKTSNKKKGTKPKSESVITSSNSTRSESELADSSNPSGESLFSTSPSTS). Over residues 139 to 158 (SVITSSNSTRSESELADSSN) the composition is skewed to polar residues. Positions 159–172 (PSGESLFSTSPSTS) are enriched in low complexity.

As to quaternary structure, interacts with SCRM/ICE1. As to expression, expressed in roots, leaves, stems and flowers. Expressed in stomatal guard cells.

The protein resides in the nucleus. In terms of biological role, transcription factor involved in cold-regulation of CBF genes and in the development of freezing tolerance. May be part of a complex network of transcription factors controlling the expression of CBF genes and other genes in response to cold stress. Binds to the MYB recognition sequences in the promoters of CBF1, CBF2 and CBF3 genes. Involved in drought and salt tolerance. May enhance expression levels of genes involved in abscisic acid (ABA) biosynthesis and signaling, as well as those encoding stress-protective proteins. This Arabidopsis thaliana (Mouse-ear cress) protein is Transcription factor MYB15.